A 193-amino-acid polypeptide reads, in one-letter code: ATP-dependent Clp protease proteolytic subunit 1 (193 aa).

S98 (nucleophile) is an active-site residue. The active site involves H123.

Belongs to the peptidase S14 family. As to quaternary structure, fourteen ClpP subunits assemble into 2 heptameric rings which stack back to back to give a disk-like structure with a central cavity, resembling the structure of eukaryotic proteasomes.

The protein resides in the cytoplasm. It catalyses the reaction Hydrolysis of proteins to small peptides in the presence of ATP and magnesium. alpha-casein is the usual test substrate. In the absence of ATP, only oligopeptides shorter than five residues are hydrolyzed (such as succinyl-Leu-Tyr-|-NHMec, and Leu-Tyr-Leu-|-Tyr-Trp, in which cleavage of the -Tyr-|-Leu- and -Tyr-|-Trp bonds also occurs).. Cleaves peptides in various proteins in a process that requires ATP hydrolysis. Has a chymotrypsin-like activity. Plays a major role in the degradation of misfolded proteins. The chain is ATP-dependent Clp protease proteolytic subunit 1 from Bacillus cereus (strain ATCC 10987 / NRS 248).